Reading from the N-terminus, the 109-residue chain is UPF0102 protein Suden_1901 (109 aa).

The protein belongs to the UPF0102 family.

This is UPF0102 protein Suden_1901 from Sulfurimonas denitrificans (strain ATCC 33889 / DSM 1251) (Thiomicrospira denitrificans (strain ATCC 33889 / DSM 1251)).